The primary structure comprises 332 residues: MNDTLSSFLNRNEALGLNPPHGLDMHITKRGSDWLWAVFAVFGFILLCYVVMFFIAENKGSRLTRYALAPAFLITFFEFFAFFTYASDLGWTGVQAEFNHVKVSKSITGEVPGIRQIFYSKYIAWFLSWPCLLFLIELAASTTGENDDISALDMVHSLLIQIVGTLFWVVSLLVGSLIKSTYKWGYYTIGAVAMLVTQGVICQRQFFNLKTRGFNALMLCTCMVIVWLYFICWGLSDGGNRIQPDGEAIFYGVLDLCVFAIYPCYLLIAVSRDGKLPRLSLTGGFSHHHATDDVEDAAPETKEAVPESPRASGETAIHEPEPEAEQAVEDTA.

Topologically, residues M1–W34 are extracellular. A helical transmembrane segment spans residues L35–I55. At A56 to R65 the chain is on the cytoplasmic side. The chain crosses the membrane as a helical span at residues Y66 to A86. Residues S87–K121 lie on the Extracellular side of the membrane. Residues Y122–T142 traverse the membrane as a helical segment. The Cytoplasmic segment spans residues T143 to S157. A helical membrane pass occupies residues L158–I178. At K179–T181 the chain is on the extracellular side. A helical membrane pass occupies residues Y182–C202. The Cytoplasmic portion of the chain corresponds to Q203–N215. Residues A216–S236 traverse the membrane as a helical segment. Over D237–A248 the chain is Extracellular. A helical membrane pass occupies residues I249–A269. The Cytoplasmic segment spans residues V270–A332. The segment at A290–A332 is disordered. S308 carries the post-translational modification Phosphoserine. Residues P322–A332 show a composition bias toward acidic residues. At T331 the chain carries Phosphothreonine.

This sequence belongs to the archaeal/bacterial/fungal opsin family.

It is found in the membrane. In terms of biological role, probably cooperates with other heat shock proteins in the translocation of polypeptides through membranes. It may counteract the altering effect of heat shock on the plasma membrane. The polypeptide is 30 kDa heat shock protein (HSP30) (Saccharomyces cerevisiae (strain ATCC 204508 / S288c) (Baker's yeast)).